A 208-amino-acid chain; its full sequence is Methenyltetrahydrofolate cyclohydrolase (208 aa).

A helical transmembrane segment spans residues 25–46 (GAAAISGAMGAALVSMVCNLTI).

The protein belongs to the cyclodeaminase/cyclohydrolase family. As to quaternary structure, homodimer.

It localises to the membrane. The enzyme catalyses (6R)-5,10-methenyltetrahydrofolate + H2O = (6R)-10-formyltetrahydrofolate + H(+). It functions in the pathway one-carbon metabolism; formaldehyde assimilation via serine pathway. In terms of biological role, required for both C1 and C2 metabolism. The chain is Methenyltetrahydrofolate cyclohydrolase (fchA) from Methylorubrum extorquens (strain ATCC 14718 / DSM 1338 / JCM 2805 / NCIMB 9133 / AM1) (Methylobacterium extorquens).